Consider the following 123-residue polypeptide: Small ribosomal subunit protein uS12 (123 aa).

Residue D89 is modified to 3-methylthioaspartic acid.

It belongs to the universal ribosomal protein uS12 family. In terms of assembly, part of the 30S ribosomal subunit. Contacts proteins S8 and S17. May interact with IF1 in the 30S initiation complex.

Its function is as follows. With S4 and S5 plays an important role in translational accuracy. In terms of biological role, interacts with and stabilizes bases of the 16S rRNA that are involved in tRNA selection in the A site and with the mRNA backbone. Located at the interface of the 30S and 50S subunits, it traverses the body of the 30S subunit contacting proteins on the other side and probably holding the rRNA structure together. The combined cluster of proteins S8, S12 and S17 appears to hold together the shoulder and platform of the 30S subunit. The sequence is that of Small ribosomal subunit protein uS12 from Bradyrhizobium diazoefficiens (strain JCM 10833 / BCRC 13528 / IAM 13628 / NBRC 14792 / USDA 110).